The chain runs to 232 residues: Orotate phosphoribosyltransferase (232 aa).

5-phospho-alpha-D-ribose 1-diphosphate is bound by residues arginine 107, lysine 108, lysine 111, histidine 113, and 133–141 (EDLTTAGGS). Threonine 137 is an orotate binding site.

This sequence belongs to the purine/pyrimidine phosphoribosyltransferase family. PyrE subfamily. In terms of assembly, homodimer. The cofactor is Mg(2+).

The enzyme catalyses orotidine 5'-phosphate + diphosphate = orotate + 5-phospho-alpha-D-ribose 1-diphosphate. Its pathway is pyrimidine metabolism; UMP biosynthesis via de novo pathway; UMP from orotate: step 1/2. Its function is as follows. Catalyzes the transfer of a ribosyl phosphate group from 5-phosphoribose 1-diphosphate to orotate, leading to the formation of orotidine monophosphate (OMP). The sequence is that of Orotate phosphoribosyltransferase from Rhizobium meliloti (strain 1021) (Ensifer meliloti).